Reading from the N-terminus, the 224-residue chain is Adenylate kinase (224 aa).

ATP is bound at residue 10–15; it reads GSGKGT. The segment at 30–59 is NMP; that stretch reads ESGAIFRENISKGTELGAKAKEYIDRGDLV. Residues serine 31, arginine 36, 57-59, 85-88, and glutamine 92 contribute to the AMP site; these read DLV and GFPR. The segment at 126 to 165 is LID; that stretch reads GRRLCVNDNNHPNNIFIDAIKPDGDKCRVCGGELKTRSDD. Residue arginine 127 coordinates ATP. Residues arginine 162 and arginine 174 each coordinate AMP. Proline 211 is an ATP binding site.

This sequence belongs to the adenylate kinase family. In terms of assembly, monomer.

The protein resides in the cytoplasm. It carries out the reaction AMP + ATP = 2 ADP. The protein operates within purine metabolism; AMP biosynthesis via salvage pathway; AMP from ADP: step 1/1. Catalyzes the reversible transfer of the terminal phosphate group between ATP and AMP. Plays an important role in cellular energy homeostasis and in adenine nucleotide metabolism. This chain is Adenylate kinase, found in Desulfosudis oleivorans (strain DSM 6200 / JCM 39069 / Hxd3) (Desulfococcus oleovorans).